The following is a 509-amino-acid chain: MVLDANIKAQLNQYMQLIENDIVLKVSAGEDDTSKDMLALVDELASMSSKISVEKAELNRTPSFSVNRVGEDTGVTFAGIPLGHEFTSLVLALLQVSGRPPKVDQKVIDQVKKISGEYHFESYISLTCHNCPDVVQALNMMSVLNPNITHTMIDGAAYKAEVESKNIMAVPTVYLNGESFGSGRMTLEEILAKMGSGTDASEFADKEPFDVLVVGGGPAGASAAIYTARKGIRTGVVAERFGGQVLDTMSIENFISVKATEGPKLAASLEEHVKEYDIDVMNLQRAKRLEKKDLFELELENGAVLKSKTVILSTGARWRNVNVPGEQEFKNKGVAYCPHCDGPLFEGKDVAVIGGGNSGIEAAIDLAGIVNHVTVLEFAPELKADEVLQKRLYSLPNVTVVKNAQTKEITGDQSVNGITYVDRETGEEKHVELQGVFVQIGLVPNTEWLEGTVERNRMGEIIVDKHGATSVPGLFAAGDCTDSAYNQIIISMGSGATAALGAFDYLIRN.

The segment at 1 to 183 is membrane-binding; it reads MVLDANIKAQ…YLNGESFGSG (183 aa). The tract at residues 184–509 is catalytic; sequence RMTLEEILAK…LGAFDYLIRN (326 aa). Residue 210–241 participates in FAD binding; sequence DVLVVGGGPAGASAAIYTARKGIRTGVVAERF. A disulfide bridge links cysteine 337 with cysteine 340. 349 to 379 provides a ligand contact to NAD(+); the sequence is DVAVIGGGNSGIEAAIDLAGIVNHVTVLEFA. 469 to 479 serves as a coordination point for FAD; sequence TSVPGLFAAGD.

It belongs to the class-II pyridine nucleotide-disulfide oxidoreductase family. In terms of assembly, homodimer. Requires FAD as cofactor.

Its subcellular location is the cell membrane. The catalysed reaction is a ubiquinone + NADH + 5 H(+)(in) = a ubiquinol + NAD(+) + 4 H(+)(out). Its function is as follows. Transfer of electrons from NADH to the respiratory chain. The immediate electron acceptor for the enzyme is believed to be ubiquinone. The polypeptide is NADH dehydrogenase (ahpF) (Bacillus subtilis (strain 168)).